A 336-amino-acid chain; its full sequence is Holliday junction branch migration complex subunit RuvB (336 aa).

The tract at residues 1–183 (MATERLVAGN…FGINSRLEFY (183 aa)) is large ATPase domain (RuvB-L). ATP is bound by residues L22, R23, G64, K67, T68, T69, 130–132 (EDF), R173, Y183, and R220. A Mg(2+)-binding site is contributed by T68. Residues 184 to 254 (QVAELEEIIR…VAREALELLQ (71 aa)) form a small ATPAse domain (RuvB-S) region. Residues 257–336 (AAGLDSSDRR…LGIKPEDRLF (80 aa)) are head domain (RuvB-H). Residues R312 and R317 each coordinate DNA.

It belongs to the RuvB family. Homohexamer. Forms an RuvA(8)-RuvB(12)-Holliday junction (HJ) complex. HJ DNA is sandwiched between 2 RuvA tetramers; dsDNA enters through RuvA and exits via RuvB. An RuvB hexamer assembles on each DNA strand where it exits the tetramer. Each RuvB hexamer is contacted by two RuvA subunits (via domain III) on 2 adjacent RuvB subunits; this complex drives branch migration. In the full resolvosome a probable DNA-RuvA(4)-RuvB(12)-RuvC(2) complex forms which resolves the HJ.

The protein localises to the cytoplasm. The enzyme catalyses ATP + H2O = ADP + phosphate + H(+). Functionally, the RuvA-RuvB-RuvC complex processes Holliday junction (HJ) DNA during genetic recombination and DNA repair, while the RuvA-RuvB complex plays an important role in the rescue of blocked DNA replication forks via replication fork reversal (RFR). RuvA specifically binds to HJ cruciform DNA, conferring on it an open structure. The RuvB hexamer acts as an ATP-dependent pump, pulling dsDNA into and through the RuvAB complex. RuvB forms 2 homohexamers on either side of HJ DNA bound by 1 or 2 RuvA tetramers; 4 subunits per hexamer contact DNA at a time. Coordinated motions by a converter formed by DNA-disengaged RuvB subunits stimulates ATP hydrolysis and nucleotide exchange. Immobilization of the converter enables RuvB to convert the ATP-contained energy into a lever motion, pulling 2 nucleotides of DNA out of the RuvA tetramer per ATP hydrolyzed, thus driving DNA branch migration. The RuvB motors rotate together with the DNA substrate, which together with the progressing nucleotide cycle form the mechanistic basis for DNA recombination by continuous HJ branch migration. Branch migration allows RuvC to scan DNA until it finds its consensus sequence, where it cleaves and resolves cruciform DNA. The protein is Holliday junction branch migration complex subunit RuvB of Moorella thermoacetica (strain ATCC 39073 / JCM 9320).